We begin with the raw amino-acid sequence, 445 residues long: Proline--tRNA ligase (445 aa).

The protein belongs to the class-II aminoacyl-tRNA synthetase family. ProS type 2 subfamily. Homodimer.

It localises to the cytoplasm. The catalysed reaction is tRNA(Pro) + L-proline + ATP = L-prolyl-tRNA(Pro) + AMP + diphosphate. In terms of biological role, catalyzes the attachment of proline to tRNA(Pro) in a two-step reaction: proline is first activated by ATP to form Pro-AMP and then transferred to the acceptor end of tRNA(Pro). The sequence is that of Proline--tRNA ligase from Cereibacter sphaeroides (strain ATCC 17023 / DSM 158 / JCM 6121 / CCUG 31486 / LMG 2827 / NBRC 12203 / NCIMB 8253 / ATH 2.4.1.) (Rhodobacter sphaeroides).